The following is an 89-amino-acid chain: MKEMIIWPAYIDLKRTKNEGRKVPKEFAVQNPKLKDIAGKLKKMGLEYSIEHKKSYPKDPWEICGYIKVKADKRTSKLQILKEICKNMG.

This sequence belongs to the SRP19 family. In terms of assembly, part of the signal recognition particle protein translocation system, which is composed of SRP and FtsY. Archaeal SRP consists of a 7S RNA molecule of 300 nucleotides and two protein subunits: SRP54 and SRP19.

It is found in the cytoplasm. In terms of biological role, involved in targeting and insertion of nascent membrane proteins into the cytoplasmic membrane. Binds directly to 7S RNA and mediates binding of the 54 kDa subunit of the SRP. The protein is Signal recognition particle 19 kDa protein of Methanococcus maripaludis (strain C5 / ATCC BAA-1333).